The sequence spans 349 residues: Carbamoyl phosphate synthase small chain (349 aa).

The tract at residues 1 to 170 (MKAKLILENG…KYEISGEGKK (170 aa)) is CPSase. Residues serine 45, glycine 218, and glycine 220 each contribute to the L-glutamine site. In terms of domain architecture, Glutamine amidotransferase type-1 spans 170–349 (KVAIIDFGIK…IFDEFMKYAL (180 aa)). Cysteine 245 functions as the Nucleophile in the catalytic mechanism. L-glutamine is bound by residues leucine 246, glutamine 249, asparagine 287, glycine 289, and tyrosine 290. Catalysis depends on residues histidine 327 and glutamate 329.

This sequence belongs to the CarA family. In terms of assembly, composed of two chains; the small (or glutamine) chain promotes the hydrolysis of glutamine to ammonia, which is used by the large (or ammonia) chain to synthesize carbamoyl phosphate. Tetramer of heterodimers (alpha,beta)4.

The enzyme catalyses hydrogencarbonate + L-glutamine + 2 ATP + H2O = carbamoyl phosphate + L-glutamate + 2 ADP + phosphate + 2 H(+). It carries out the reaction L-glutamine + H2O = L-glutamate + NH4(+). It participates in amino-acid biosynthesis; L-arginine biosynthesis; carbamoyl phosphate from bicarbonate: step 1/1. It functions in the pathway pyrimidine metabolism; UMP biosynthesis via de novo pathway; (S)-dihydroorotate from bicarbonate: step 1/3. Small subunit of the glutamine-dependent carbamoyl phosphate synthetase (CPSase). CPSase catalyzes the formation of carbamoyl phosphate from the ammonia moiety of glutamine, carbonate, and phosphate donated by ATP, constituting the first step of 2 biosynthetic pathways, one leading to arginine and/or urea and the other to pyrimidine nucleotides. The small subunit (glutamine amidotransferase) binds and cleaves glutamine to supply the large subunit with the substrate ammonia. This Clostridium perfringens (strain 13 / Type A) protein is Carbamoyl phosphate synthase small chain.